Reading from the N-terminus, the 549-residue chain is Cation/acetate symporter ActP (549 aa).

A run of 13 helical transmembrane segments spans residues 33–53 (WQAI…TYWA), 77–97 (LAIA…ALVF), 103–123 (GLIY…LIAE), 148–168 (ILSA…QMVG), 183–203 (IAVV…GMLA), 206–226 (WVQI…AFMV), 262–282 (ISAL…PHIL), 303–323 (GFMG…IMLV), 355–375 (LFLG…VAGL), 404–424 (VSKI…VLFE), 428–448 (IAFM…PIIL), 464–484 (GGWL…TIWV), and 493–513 (IFPY…GIWF).

This sequence belongs to the sodium:solute symporter (SSF) (TC 2.A.21) family.

The protein localises to the cell inner membrane. Transports acetate. This is Cation/acetate symporter ActP from Citrobacter koseri (strain ATCC BAA-895 / CDC 4225-83 / SGSC4696).